Here is a 282-residue protein sequence, read N- to C-terminus: Urease accessory protein UreD (282 aa).

The protein belongs to the UreD family. UreD, UreF and UreG form a complex that acts as a GTP-hydrolysis-dependent molecular chaperone, activating the urease apoprotein by helping to assemble the nickel containing metallocenter of UreC. The UreE protein probably delivers the nickel.

The protein localises to the cytoplasm. Functionally, required for maturation of urease via the functional incorporation of the urease nickel metallocenter. The chain is Urease accessory protein UreD from Methylobacterium sp. (strain 4-46).